A 307-amino-acid polypeptide reads, in one-letter code: MLQRTLAKSIGVTGVGLHSGERVALTLHPAPENSGISFRRTDLDGEMGEQIKLNPYLINDTRLSSTIVTDKGLRVGTIEHIMSALSAYGIDNALIELNAPEIPIMDGSSLPFIYLLQDAGVVDQKAQKRFLKILKPVEIKEAGKWVRFTPYDGFKVTLTIEFDHPVFNRSPPTFEIDFAGKSYIGEIARARTFGFMHEVEMMRAHNLGLGGNLNNAIVIGDTDVLNPEGLRYPDEFVRHKILDAIGDLYIVGHPIVGAFEGYKSGHAVNNALLRAVLADETAYEWVEFADSDDLPDAFHELNIRNCG.

3 residues coordinate Zn(2+): histidine 80, histidine 239, and aspartate 243. The Proton donor role is filled by histidine 266.

It belongs to the LpxC family. The cofactor is Zn(2+).

It catalyses the reaction a UDP-3-O-[(3R)-3-hydroxyacyl]-N-acetyl-alpha-D-glucosamine + H2O = a UDP-3-O-[(3R)-3-hydroxyacyl]-alpha-D-glucosamine + acetate. It participates in glycolipid biosynthesis; lipid IV(A) biosynthesis; lipid IV(A) from (3R)-3-hydroxytetradecanoyl-[acyl-carrier-protein] and UDP-N-acetyl-alpha-D-glucosamine: step 2/6. Functionally, catalyzes the hydrolysis of UDP-3-O-myristoyl-N-acetylglucosamine to form UDP-3-O-myristoylglucosamine and acetate, the committed step in lipid A biosynthesis. The chain is UDP-3-O-acyl-N-acetylglucosamine deacetylase from Neisseria gonorrhoeae (strain ATCC 700825 / FA 1090).